Here is a 327-residue protein sequence, read N- to C-terminus: Cobalamin biosynthesis protein CobD (327 aa).

Helical transmembrane passes span 61–78 (MWLT…GLVI), 80–102 (SILP…ILLA), 160–182 (GIVA…YKLI), and 300–322 (AALV…ASLV).

It belongs to the CobD/CbiB family.

The protein resides in the cell membrane. The protein operates within cofactor biosynthesis; adenosylcobalamin biosynthesis. In terms of biological role, converts cobyric acid to cobinamide by the addition of aminopropanol on the F carboxylic group. This is Cobalamin biosynthesis protein CobD from Brucella suis biovar 1 (strain 1330).